Here is a 553-residue protein sequence, read N- to C-terminus: 4-coumarate--CoA ligase (553 aa).

ATP-binding residues include serine 198, serine 199, glycine 200, threonine 201, threonine 202, and lysine 206. (E)-4-coumaroyl-AMP is bound by residues tyrosine 248 and serine 252. Lysine 269 provides a ligand contact to CoA. An SBD1 region spans residues 271-340 (EIVPFLELIQ…AKFPNAKLGQ (70 aa)). Alanine 318, glutamine 340, glycine 341, threonine 345, and methionine 353 together coordinate (E)-4-coumaroyl-AMP. ATP contacts are provided by glutamine 340, glycine 341, and threonine 345. The SBD2 stretch occupies residues 341 to 408 (GYGMTEAGPV…IRGDQIMKGY (68 aa)). ATP contacts are provided by aspartate 429 and arginine 444. Residues lysine 446 and lysine 450 each contribute to the (E)-4-coumaroyl-AMP site. CoA-binding residues include lysine 452 and glycine 453. Lysine 535 is an ATP binding site.

It belongs to the ATP-dependent AMP-binding enzyme family. Mg(2+) serves as cofactor.

It carries out the reaction (E)-4-coumarate + ATP + CoA = (E)-4-coumaroyl-CoA + AMP + diphosphate. The enzyme catalyses (E)-4-coumarate + ATP + H(+) = (E)-4-coumaroyl-AMP + diphosphate. It catalyses the reaction (E)-4-coumaroyl-AMP + CoA = (E)-4-coumaroyl-CoA + AMP + H(+). The protein operates within phytoalexin biosynthesis; 3,4',5-trihydroxystilbene biosynthesis; 3,4',5-trihydroxystilbene from trans-4-coumarate: step 1/2. Its function is as follows. Carboxylate--CoA ligase that may use 4-coumarate as substrate. Follows a two-step reaction mechanism, wherein the carboxylate substrate first undergoes adenylation by ATP, followed by a thioesterification in the presence of CoA to yield the final CoA thioester. The polypeptide is 4-coumarate--CoA ligase (Vanilla planifolia (Vanilla)).